The primary structure comprises 245 residues: Geranylgeranylglyceryl phosphate synthase (245 aa).

Residues Asp-20 and Ser-50 each contribute to the Mg(2+) site. Residues 169-175 (YLEAGSG), 202-203 (GG), and 224-225 (GT) each bind sn-glycerol 1-phosphate.

It belongs to the GGGP/HepGP synthase family. Group II subfamily. Mg(2+) is required as a cofactor.

It is found in the cytoplasm. The enzyme catalyses sn-glycerol 1-phosphate + (2E,6E,10E)-geranylgeranyl diphosphate = sn-3-O-(geranylgeranyl)glycerol 1-phosphate + diphosphate. It functions in the pathway membrane lipid metabolism; glycerophospholipid metabolism. Its function is as follows. Prenyltransferase that catalyzes the transfer of the geranylgeranyl moiety of geranylgeranyl diphosphate (GGPP) to the C3 hydroxyl of sn-glycerol-1-phosphate (G1P). This reaction is the first ether-bond-formation step in the biosynthesis of archaeal membrane lipids. The protein is Geranylgeranylglyceryl phosphate synthase of Ignicoccus hospitalis (strain KIN4/I / DSM 18386 / JCM 14125).